The primary structure comprises 145 residues: D-aminoacyl-tRNA deacylase (145 aa).

The short motif at 137 to 138 is the Gly-cisPro motif, important for rejection of L-amino acids element; the sequence is GP.

It belongs to the DTD family. In terms of assembly, homodimer.

It localises to the cytoplasm. It catalyses the reaction glycyl-tRNA(Ala) + H2O = tRNA(Ala) + glycine + H(+). The enzyme catalyses a D-aminoacyl-tRNA + H2O = a tRNA + a D-alpha-amino acid + H(+). An aminoacyl-tRNA editing enzyme that deacylates mischarged D-aminoacyl-tRNAs. Also deacylates mischarged glycyl-tRNA(Ala), protecting cells against glycine mischarging by AlaRS. Acts via tRNA-based rather than protein-based catalysis; rejects L-amino acids rather than detecting D-amino acids in the active site. By recycling D-aminoacyl-tRNA to D-amino acids and free tRNA molecules, this enzyme counteracts the toxicity associated with the formation of D-aminoacyl-tRNA entities in vivo and helps enforce protein L-homochirality. The protein is D-aminoacyl-tRNA deacylase of Dinoroseobacter shibae (strain DSM 16493 / NCIMB 14021 / DFL 12).